A 727-amino-acid chain; its full sequence is Glycerol-3-phosphate dehydrogenase, mitochondrial (727 aa).

The N-terminal 42 residues, 1–42 (MAFQKAVKGTILVGGGALATVLGLSQFAHYRRKQMNLAYVKA), are a transit peptide targeting the mitochondrion. Residue 71–99 (DILVIGGGATGSGCALDAVTRGLKTALVE) participates in FAD binding. Tyr601 carries the post-translational modification Phosphotyrosine. EF-hand domains follow at residues 623–658 (SDID…INVQ) and 659–694 (MDEN…IQKG). Residues Asp672, Asn674, Asn676, Gln678, and Glu683 each contribute to the Ca(2+) site.

The protein belongs to the FAD-dependent glycerol-3-phosphate dehydrogenase family. It depends on FAD as a cofactor.

It is found in the mitochondrion. It carries out the reaction a quinone + sn-glycerol 3-phosphate = dihydroxyacetone phosphate + a quinol. The protein operates within polyol metabolism; glycerol degradation via glycerol kinase pathway; glycerone phosphate from sn-glycerol 3-phosphate (aerobic route): step 1/1. Its activity is regulated as follows. Calcium-binding enhance the activity of the enzyme. Its function is as follows. Calcium-responsive mitochondrial glycerol-3-phosphate dehydrogenase which seems to be a key component of the pancreatic beta-cell glucose-sensing device. The sequence is that of Glycerol-3-phosphate dehydrogenase, mitochondrial (GPD2) from Macaca fascicularis (Crab-eating macaque).